The chain runs to 332 residues: Adenosine receptor A2b (332 aa).

Residues methionine 1–alanine 8 lie on the Extracellular side of the membrane. The helical transmembrane segment at leucine 9–glycine 33 threads the bilayer. The Cytoplasmic segment spans residues threonine 34–asparagine 43. Residues tyrosine 44–isoleucine 67 form a helical membrane-spanning segment. Topologically, residues serine 68–cysteine 78 are extracellular. A disulfide bond links cysteine 78 and cysteine 171. Residues leucine 79–valine 101 form a helical membrane-spanning segment. Topologically, residues aspartate 102–arginine 121 are cytoplasmic. A helical transmembrane segment spans residues alanine 122 to tryptophan 144. At asparagine 145–proline 178 the chain is on the extracellular side. 2 N-linked (GlcNAc...) asparagine glycosylation sites follow: asparagine 153 and asparagine 163. Glutamate 174 contacts adenosine. The chain crosses the membrane as a helical span at residues methionine 179–isoleucine 203. The Cytoplasmic portion of the chain corresponds to lysine 204–serine 235. Residues leucine 236 to phenylalanine 259 traverse the membrane as a helical segment. Asparagine 254 is a binding site for adenosine. Residues glutamine 260–lysine 267 lie on the Extracellular side of the membrane. A helical membrane pass occupies residues proline 268–alanine 291. Positions 279 and 280 each coordinate adenosine. Residues tyrosine 292–leucine 332 lie on the Cytoplasmic side of the membrane. A lipid anchor (S-palmitoyl cysteine) is attached at cysteine 311.

The protein belongs to the G-protein coupled receptor 1 family.

Its subcellular location is the cell membrane. Its function is as follows. Receptor for adenosine. The activity of this receptor is mediated by G proteins which activate adenylyl cyclase. This chain is Adenosine receptor A2b (ADORA2B), found in Homo sapiens (Human).